The following is a 380-amino-acid chain: MYG1 exonuclease (380 aa).

The transit peptide at 1-46 directs the protein to the mitochondrion; that stretch reads MGRRFLRGILTLPLRSVLQAQHRMLGSEQDPPAKRPRNNLMAPPRI. Residues lysine 266 and lysine 272 each carry the N6-acetyllysine modification.

The protein belongs to the MYG1 family. Ubiquitously expressed, with highest levels in testis.

It localises to the nucleus. Its subcellular location is the nucleoplasm. The protein localises to the mitochondrion matrix. It is found in the nucleolus. Its function is as follows. 3'-5' RNA exonuclease which cleaves in situ on specific transcripts in both nucleus and mitochondrion. Involved in regulating spatially segregated organellar RNA processing, acts as a coordinator of nucleo-mitochondrial crosstalk. In nucleolus, processes pre-ribosomal RNA involved in ribosome assembly and alters cytoplasmic translation. In mitochondrial matrix, processes 3'-termini of the mito-ribosomal and messenger RNAs and controls translation of mitochondrial proteins. This Mus musculus (Mouse) protein is MYG1 exonuclease.